A 1077-amino-acid chain; its full sequence is Semaphorin-5A (1077 aa).

The N-terminal stretch at 1–21 (MKGACILAWLFSSLGVWRLAR) is a signal peptide. Residues 22-971 (PETQDPAKCQ…RCGEFNMFHM (950 aa)) lie on the Extracellular side of the membrane. The region spanning 35–484 (HPVVSYKEIG…LQEHVAKIPL (450 aa)) is the Sema domain. 2 disulfide bridges follow: Cys104–Cys114 and Cys131–Cys140. N-linked (GlcNAc...) asparagine glycosylation is found at Asn147, Asn168, Asn227, and Asn277. 2 cysteine pairs are disulfide-bonded: Cys254–Cys357 and Cys278–Cys320. Residues Asn323 and Asn367 are each glycosylated (N-linked (GlcNAc...) asparagine). Cystine bridges form between Cys487–Cys504 and Cys496–Cys513. Residues Asn536 and Asn591 are each glycosylated (N-linked (GlcNAc...) asparagine). 7 consecutive TSP type-1 domains span residues 540–593 (DGSF…TNCS), 595–651 (NGGW…LLCP), 653–702 (HVFW…NACP), 707–765 (TTPW…GCST), 784–839 (NGAW…LPCP), 841–896 (DGVW…QTCP), and 897–944 (ESWS…VFDS). 6 cysteine pairs are disulfide-bonded: Cys607–Cys644, Cys611–Cys650, Cys622–Cys634, Cys665–Cys696, Cys669–Cys701, and Cys680–Cys686. A glycan (N-linked (GlcNAc...) asparagine) is linked at Asn717. Intrachain disulfides connect Cys796–Cys833, Cys800–Cys838, Cys811–Cys823, Cys853–Cys890, Cys857–Cys895, and Cys868–Cys880. Asn933 is a glycosylation site (N-linked (GlcNAc...) asparagine). Residues 972–992 (FHMMAVGLSSSILGCLLTLLV) traverse the membrane as a helical segment. Residues 993 to 1077 (YTYCQRYQQQ…FTDLNNYDEY (85 aa)) lie on the Cytoplasmic side of the membrane.

This sequence belongs to the semaphorin family. Binds PLXNB3. As to expression, in adult, detected in liver, brain, kidney, heart, lung and spleen.

It is found in the membrane. Its function is as follows. Bifunctional axonal guidance cue regulated by sulfated proteoglycans; attractive effects result from interactions with heparan sulfate proteoglycans (HSPGs), while the inhibitory effects depend on interactions with chondroitin sulfate proteoglycans (CSPGs). Ligand for receptor PLXNB3. In glioma cells, SEMA5A stimulation of PLXNB3 results in the disassembly of F-actin stress fibers, disruption of focal adhesions and cellular collapse as well as inhibition of cell migration and invasion through ARHGDIA-mediated inactivation of RAC1. May promote angiogenesis by increasing endothelial cell proliferation and migration and inhibiting apoptosis. This is Semaphorin-5A (Sema5a) from Mus musculus (Mouse).